Reading from the N-terminus, the 146-residue chain is Inclusion membrane protein D (146 aa).

The next 2 membrane-spanning stretches (helical) occupy residues 38–58 (AAVAVATILAIALLVVAGLLF) and 68–88 (VVAASLFFGVGAFLLGGALVG).

It is found in the secreted. It localises to the host vacuole. The protein localises to the host pathogen-containing vacuole. The protein resides in the host pathogen-containing vacuole membrane. In terms of biological role, host inclusion membrane protein probably involved in early modification events of the chlamydial inclusion. This is Inclusion membrane protein D from Chlamydia trachomatis serovar L2 (strain ATCC VR-902B / DSM 19102 / 434/Bu).